Here is a 153-residue protein sequence, read N- to C-terminus: 6,7-dimethyl-8-ribityllumazine synthase (153 aa).

Residues Phe22, 56-58 (AFE), and 80-82 (TVI) contribute to the 5-amino-6-(D-ribitylamino)uracil site. Residue 85–86 (ST) participates in (2S)-2-hydroxy-3-oxobutyl phosphate binding. His88 acts as the Proton donor in catalysis. Position 113 (Phe113) interacts with 5-amino-6-(D-ribitylamino)uracil. Arg127 contributes to the (2S)-2-hydroxy-3-oxobutyl phosphate binding site.

Belongs to the DMRL synthase family. As to quaternary structure, forms an icosahedral capsid composed of 60 subunits, arranged as a dodecamer of pentamers.

The catalysed reaction is (2S)-2-hydroxy-3-oxobutyl phosphate + 5-amino-6-(D-ribitylamino)uracil = 6,7-dimethyl-8-(1-D-ribityl)lumazine + phosphate + 2 H2O + H(+). The protein operates within cofactor biosynthesis; riboflavin biosynthesis; riboflavin from 2-hydroxy-3-oxobutyl phosphate and 5-amino-6-(D-ribitylamino)uracil: step 1/2. Catalyzes the formation of 6,7-dimethyl-8-ribityllumazine by condensation of 5-amino-6-(D-ribitylamino)uracil with 3,4-dihydroxy-2-butanone 4-phosphate. This is the penultimate step in the biosynthesis of riboflavin. This is 6,7-dimethyl-8-ribityllumazine synthase from Haemophilus ducreyi (strain 35000HP / ATCC 700724).